Consider the following 275-residue polypeptide: 2'-N-acetylparomamine deacetylase (275 aa).

Residues His-14, Asp-17, and His-166 each contribute to the Zn(2+) site.

The protein belongs to the PIGL family. The cofactor is Zn(2+).

The enzyme catalyses 2'-N-acetylparomamine + H2O = paromamine + acetate. It functions in the pathway antibiotic biosynthesis; butirosin biosynthesis. Deacetylase involved in the biosynthesis of butirosin by mediating deacetylation of 2'-N-acetylparomamine. This Niallia circulans (Bacillus circulans) protein is 2'-N-acetylparomamine deacetylase (btrD).